The primary structure comprises 40 residues: Photosystem II reaction center protein X (40 aa).

The Lumenal segment spans residues 1 to 11; it reads TITPSLKGFFI. A helical membrane pass occupies residues 12–28; it reads GLLSGAVVLGLTFAVLI. Over 29-40 the chain is Cytoplasmic; that stretch reads AISQIDKVQRSL.

It belongs to the PsbX family. Type 1 subfamily. PSII is composed of 1 copy each of membrane proteins PsbA, PsbB, PsbC, PsbD, PsbE, PsbF, PsbH, PsbI, PsbJ, PsbK, PsbL, PsbM, PsbT, PsbX, PsbY, PsbZ, Psb30/Ycf12, peripheral proteins PsbO, CyanoQ (PsbQ), PsbU, PsbV and a large number of cofactors. It forms dimeric complexes. PSII binds multiple chlorophylls, carotenoids and specific lipids. is required as a cofactor.

It localises to the cellular thylakoid membrane. Its function is as follows. Involved in the binding and/or turnover of quinones at the Q(B) site of photosystem II (PSII). PSII is a light-driven water plastoquinone oxidoreductase, using light energy to abstract electrons from H(2)O, generating a proton gradient subsequently used for ATP formation. The protein is Photosystem II reaction center protein X of Thermostichus vulcanus (Synechococcus vulcanus).